A 207-amino-acid polypeptide reads, in one-letter code: Ras-related protein Rab-7a (207 aa).

At Thr2 the chain carries N-acetylthreonine. Ser17, Gly18, Val19, Gly20, Lys21, Thr22, Ser23, Ser34, Asn35, Tyr37, and Thr40 together coordinate GTP. Mg(2+) is bound at residue Thr22. The Switch 1 signature appears at 28–41 (YVNKKFSNQYKATI). Mg(2+) is bound by residues Thr40 and Asp63. Position 66 (Gly66) interacts with GTP. Positions 67 to 82 (QERFQSLGVAFYRGAD) match the Switch 2 motif. Ser72 is subject to Phosphoserine. Positions 125, 126, 128, 156, and 157 each coordinate GTP. Residues Lys191 and Lys194 each participate in a glycyl lysine isopeptide (Lys-Gly) (interchain with G-Cter in ubiquitin) cross-link. Residues Cys205 and Cys207 are each lipidated (S-geranylgeranyl cysteine). Position 207 is a cysteine methyl ester (Cys207).

It belongs to the small GTPase superfamily. Rab family. Interacts with NTRK1/TRKA. Interacts with RILP. Interacts with PSMA7. Interacts with RNF115. Interacts with FYCO1. Interacts with the PIK3C3/VPS34-PIK3R4 complex. The GTP-bound form interacts with OSBPL1A. The GTP-bound form interacts with RAC1. Interacts with CLN3. Interacts with CHM, the substrate-binding subunit of the Rab geranylgeranyltransferase complex. Interacts with C9orf72. Does not interact with HPS4 and the BLOC-3 complex (heterodimer of HPS1 and HPS4). Interacts with CLN5. Interacts with PLEKHM1 (via N- and C-terminus). Interacts with PRPH; the interaction is direct. Interacts with VPS13A. The GDP-bound form interacts with RIMOC1. Interacts with the MON1A-CCZ1B complex and this interaction is enhanced in the presence of RIMOC1. Interacts with VPS39 and VPS41. Forms a ternary complex with LAMP2 and RUFY4; the interaction with LAMP2 is mediated by RUFY4 (via RUN and coiled coil domains). Requires Mg(2+) as cofactor. Post-translationally, deubiquitination at Lys-191 and Lys-194 by USP32. In terms of processing, phosphorylated at Ser-72 by LRRK1; phosphorylation is dependent on protein kinase C (PKC) activation of LRRK1. Prenylated. Prenylation is required for association with cellular membranes.

It localises to the cytoplasmic vesicle. Its subcellular location is the phagosome membrane. It is found in the late endosome membrane. The protein localises to the lysosome membrane. The protein resides in the melanosome membrane. It localises to the autophagosome membrane. Its subcellular location is the lipid droplet. It is found in the endosome membrane. The protein localises to the mitochondrion membrane. The catalysed reaction is GTP + H2O = GDP + phosphate + H(+). With respect to regulation, regulated by guanine nucleotide exchange factors (GEFs) which promote the exchange of bound GDP for free GTP. Regulated by GTPase activating proteins (GAPs) which increase the GTP hydrolysis activity. Inhibited by GDP dissociation inhibitors (GDIs). The small GTPases Rab are key regulators of intracellular membrane trafficking, from the formation of transport vesicles to their fusion with membranes. Rabs cycle between an inactive GDP-bound form and an active GTP-bound form that is able to recruit to membranes different sets of downstream effectors directly responsible for vesicle formation, movement, tethering and fusion. In its active state, RAB7A binds to a variety of effector proteins playing a key role in the regulation of endo-lysosomal trafficking. Governs early-to-late endosomal maturation, microtubule minus-end as well as plus-end directed endosomal migration and positioning, and endosome-lysosome transport through different protein-protein interaction cascades. Also plays a central role in growth-factor-mediated cell signaling, nutrient-transporter-mediated nutrient uptake, neurotrophin transport in the axons of neurons and lipid metabolism. Also involved in regulation of some specialized endosomal membrane trafficking, such as maturation of melanosomes, pathogen-induced phagosomes (or vacuoles) and autophagosomes. Plays a role in the maturation and acidification of phagosomes that engulf pathogens, such as S.aureus and Mycobacteria. Plays a role in the fusion of phagosomes with lysosomes. In concert with RAC1, plays a role in regulating the formation of RBs (ruffled borders) in osteoclasts. Controls the endosomal trafficking and neurite outgrowth signaling of NTRK1/TRKA. Regulates the endocytic trafficking of the EGF-EGFR complex by regulating its lysosomal degradation. Involved in the ADRB2-stimulated lipolysis through lipophagy, a cytosolic lipase-independent autophagic pathway. Required for the exosomal release of SDCBP, CD63 and syndecan. Required for vesicular trafficking and cell surface expression of ACE2. May play a role in PRPH neuronal intermediate filament assembly. The protein is Ras-related protein Rab-7a (RAB7A) of Pongo abelii (Sumatran orangutan).